Reading from the N-terminus, the 52-residue chain is Large ribosomal subunit protein bL33 (52 aa).

The protein belongs to the bacterial ribosomal protein bL33 family.

This Chlamydia abortus (strain DSM 27085 / S26/3) (Chlamydophila abortus) protein is Large ribosomal subunit protein bL33.